The primary structure comprises 929 residues: Isoleucine--tRNA ligase (929 aa).

The 'HIGH' region motif lies at 58 to 68; the sequence is PYANGDIHIGH. An L-isoleucyl-5'-AMP-binding site is contributed by glutamate 563. The short motif at 605–609 is the 'KMSKS' region element; sequence KMSKS. Lysine 608 contacts ATP. Zn(2+)-binding residues include cysteine 892, cysteine 895, cysteine 912, and cysteine 915.

It belongs to the class-I aminoacyl-tRNA synthetase family. IleS type 1 subfamily. Monomer. Zn(2+) is required as a cofactor.

Its subcellular location is the cytoplasm. It carries out the reaction tRNA(Ile) + L-isoleucine + ATP = L-isoleucyl-tRNA(Ile) + AMP + diphosphate. Functionally, catalyzes the attachment of isoleucine to tRNA(Ile). As IleRS can inadvertently accommodate and process structurally similar amino acids such as valine, to avoid such errors it has two additional distinct tRNA(Ile)-dependent editing activities. One activity is designated as 'pretransfer' editing and involves the hydrolysis of activated Val-AMP. The other activity is designated 'posttransfer' editing and involves deacylation of mischarged Val-tRNA(Ile). The polypeptide is Isoleucine--tRNA ligase (Neisseria meningitidis serogroup A / serotype 4A (strain DSM 15465 / Z2491)).